Here is a 271-residue protein sequence, read N- to C-terminus: Probable diacyglycerol O-acyltransferase tgs3 (271 aa).

The protein belongs to the long-chain O-acyltransferase family.

The enzyme catalyses an acyl-CoA + a 1,2-diacyl-sn-glycerol = a triacyl-sn-glycerol + CoA. The protein operates within glycerolipid metabolism; triacylglycerol biosynthesis. In terms of biological role, catalyzes the terminal and only committed step in triacylglycerol synthesis by using diacylglycerol and fatty acyl CoA as substrates. Required for storage lipid synthesis. The protein is Probable diacyglycerol O-acyltransferase tgs3 (tgs3) of Mycobacterium tuberculosis (strain CDC 1551 / Oshkosh).